The sequence spans 104 residues: MAAKIRREDEVVVLAGKDKGKRAKVSQVLPTGKLIVEGVNLVKKHQKPNPQLGVAGGIVEQEAPIQASNVAIFNSATGKADRVGFRLEDGKKVRFFKSNSELVK.

This sequence belongs to the universal ribosomal protein uL24 family. Part of the 50S ribosomal subunit.

Its function is as follows. One of two assembly initiator proteins, it binds directly to the 5'-end of the 23S rRNA, where it nucleates assembly of the 50S subunit. In terms of biological role, one of the proteins that surrounds the polypeptide exit tunnel on the outside of the subunit. The polypeptide is Large ribosomal subunit protein uL24 (Shewanella woodyi (strain ATCC 51908 / MS32)).